Reading from the N-terminus, the 764-residue chain is Probable glutamate--tRNA ligase, cytoplasmic (764 aa).

L-glutamate is bound at residue 228–230; that stretch reads RFP. Residues 233–242 carry the 'HIGH' region motif; that stretch reads PSGYMHIGHC. Residue His-238 participates in ATP binding. Residues Asp-264, 404-408, and Arg-422 each bind L-glutamate; that span reads YDFAC. ATP-binding positions include Glu-425 and 460–464; that span reads LLSKR. A 'KMSKS' region motif is present at residues 460-464; the sequence is LLSKR.

This sequence belongs to the class-I aminoacyl-tRNA synthetase family. Glutamate--tRNA ligase type 2 subfamily.

It is found in the cytoplasm. The enzyme catalyses tRNA(Glu) + L-glutamate + ATP = L-glutamyl-tRNA(Glu) + AMP + diphosphate. Functionally, catalyzes the attachment of glutamate to tRNA(Glu) in a two-step reaction: glutamate is first activated by ATP to form Glu-AMP and then transferred to the acceptor end of tRNA(Glu). The sequence is that of Probable glutamate--tRNA ligase, cytoplasmic (gluS) from Dictyostelium discoideum (Social amoeba).